Here is a 219-residue protein sequence, read N- to C-terminus: Probable nicotinate-nucleotide adenylyltransferase (219 aa).

Belongs to the NadD family.

The enzyme catalyses nicotinate beta-D-ribonucleotide + ATP + H(+) = deamido-NAD(+) + diphosphate. It participates in cofactor biosynthesis; NAD(+) biosynthesis; deamido-NAD(+) from nicotinate D-ribonucleotide: step 1/1. Functionally, catalyzes the reversible adenylation of nicotinate mononucleotide (NaMN) to nicotinic acid adenine dinucleotide (NaAD). In Hahella chejuensis (strain KCTC 2396), this protein is Probable nicotinate-nucleotide adenylyltransferase.